We begin with the raw amino-acid sequence, 37 residues long: Potassium channel toxin alpha-KTx 4.3 (37 aa).

3 disulfides stabilise this stretch: cysteine 7–cysteine 28, cysteine 13–cysteine 33, and cysteine 17–cysteine 35. An interaction with Ca(2+)-activated K(+) channels region spans residues 26–33 (GKCMNGKC).

As to expression, expressed by the venom gland.

Its subcellular location is the secreted. Its function is as follows. Blocks reversibly Shaker B potassium-channels. The sequence is that of Potassium channel toxin alpha-KTx 4.3 from Tityus discrepans (Venezuelan scorpion).